We begin with the raw amino-acid sequence, 235 residues long: Ribonuclease PH (235 aa).

Residues Arg-86 and 124–126 (GTR) each bind phosphate.

Belongs to the RNase PH family. As to quaternary structure, homohexameric ring arranged as a trimer of dimers.

It carries out the reaction tRNA(n+1) + phosphate = tRNA(n) + a ribonucleoside 5'-diphosphate. Its function is as follows. Phosphorolytic 3'-5' exoribonuclease that plays an important role in tRNA 3'-end maturation. Removes nucleotide residues following the 3'-CCA terminus of tRNAs; can also add nucleotides to the ends of RNA molecules by using nucleoside diphosphates as substrates, but this may not be physiologically important. Probably plays a role in initiation of 16S rRNA degradation (leading to ribosome degradation) during starvation. This chain is Ribonuclease PH, found in Legionella pneumophila (strain Paris).